The chain runs to 371 residues: Macronuclear solute carrier homolog CR-MSC (371 aa).

Solcar repeat units lie at residues Arg16 to Lys111, Ala120 to Asn208, and Pro215 to Phe304. Transmembrane regions (helical) follow at residues Phe22–Val42, Thr89–Tyr109, Val126–Val146, Ala184–Trp204, Leu221–Ile241, and Phe281–Leu301.

The protein belongs to the mitochondrial carrier (TC 2.A.29) family.

It is found in the membrane. The chain is Macronuclear solute carrier homolog CR-MSC from Oxytricha fallax.